A 236-amino-acid chain; its full sequence is MLKLEKITYLYDHLPMCFDLRIQPGERVAILGPSGAGKSTLLSLIAGFLAPTGGHMLLNNQDHTASTPAQRPVSMLFQENNLFAHLTVEQNIGLGLHPGLKLSGEQRLLLQHIAQQVGLESCLDRLPAQLSGGQRQRAALARCLVRSQPILLLDEPFSALDPALRNEMLQLVDQVCINRQLTLLMVSHNLDDAARIAQRTLLIVEGRIDYDGPTQALVDGSAAKASVLGIKSAVIS.

In terms of domain architecture, ABC transporter spans 2 to 230; it reads LKLEKITYLY…SAAKASVLGI (229 aa). 32 to 39 contacts ATP; the sequence is GPSGAGKS.

This sequence belongs to the ABC transporter superfamily. Thiamine importer (TC 3.A.1.19.1) family. As to quaternary structure, the complex is composed of two ATP-binding proteins (ThiQ), two transmembrane proteins (ThiP) and a solute-binding protein (ThiB).

The protein resides in the cell inner membrane. The catalysed reaction is thiamine(out) + ATP + H2O = thiamine(in) + ADP + phosphate + H(+). Its function is as follows. Part of the ABC transporter complex ThiBPQ involved in thiamine import. Responsible for energy coupling to the transport system. This chain is Thiamine import ATP-binding protein ThiQ, found in Yersinia pestis bv. Antiqua (strain Antiqua).